The sequence spans 1196 residues: Jouberin (1196 aa).

A coiled-coil region spans residues 13-45 (KVRFEELLKTHSDLMREKKKLKKKLVRSEENIS). A Phosphoserine modification is found at S45. 3 disordered regions span residues 56 to 186 (MKET…EEDE), 215 to 242 (QLTYFPSDTLFHDDKLSSEKRKKKKEVP), and 254 to 327 (ISGD…HEIT). Residues 80-91 (DDVSAANTNNLK) show a composition bias toward polar residues. Residues 92-101 (KSTRVTKNKL) are compositionally biased toward basic residues. Positions 102-113 (RNTQLATENPNG) are enriched in polar residues. Basic and acidic residues-rich tracts occupy residues 141–154 (LKPETPENKVDSTH), 166–179 (DHQKSEKANEGREE), and 224–233 (LFHDDKLSSE). An interaction with HAP1 region spans residues 141-434 (LKPETPENKV…VFNENFPYLL (294 aa)). Positions 300–309 (KPKKTKKKTK) are enriched in basic residues. WD repeat units follow at residues 607–649 (AGER…FMRE), 652–691 (GHLNIIYDLSWSKDDHYILTSSSDGTARIWKNEINNTNTF), 695–735 (PHPS…DSAI), 742–781 (VHKSFINSLCFDTEGHHMYSGDCTGVIVVWNTYVKINDLE), 797–837 (EFKG…ARKF), 841–880 (ANYREKIHSTLTPCGTFLFAGSEDGIVYVWNPETGEQVAM), and 885–926 (PFKS…AQQE). Residue S1002 is modified to Phosphoserine. The 61-residue stretch at 1051–1111 (DTAPTVVALY…PANHVASETL (61 aa)) folds into the SH3 domain. The interval 1115-1196 (LPPEIKERSP…QAGRKVTLIE (82 aa)) is disordered. Basic and acidic residues-rich tracts occupy residues 1117–1136 (PEIKERSPPLSPEEKTKIEK) and 1161–1182 (THSEMRKEQSHEDQGHIMDTRM). A Phosphoserine modification is found at S1123.

In terms of assembly, self-associates. Part of the tectonic-like complex (also named B9 complex). Interacts with MKS1. Interacts with NPHP1; probably as heterodimers and/or AHI1(2):NPHP1(2) heterotetramers. Interacts (via SH3 domain) with the dynamin GTPase DNM2. Interacts with HAP1; probably as AHI1(2):HAP1(2) heterotetramers. Interacts with RAB8A. Interacts with CEND1. Interacts with CTNNB1/beta-catenin. Interacts with SPATA7. Highly expressed in the most primitive normal hematopoietic cells. Expressed in brain, particularly in neurons that give rise to the crossing axons of the corticospinal tract and superior cerebellar peduncles. Expressed in kidney (renal collecting duct cells) (at protein level).

It localises to the cytoplasm. The protein localises to the cytoskeleton. It is found in the cilium basal body. The protein resides in the cell junction. Its subcellular location is the adherens junction. It localises to the microtubule organizing center. The protein localises to the centrosome. It is found in the centriole. Involved in vesicle trafficking and required for ciliogenesis, formation of primary non-motile cilium, and recruitment of RAB8A to the basal body of primary cilium. Component of the tectonic-like complex, a complex localized at the transition zone of primary cilia and acting as a barrier that prevents diffusion of transmembrane proteins between the cilia and plasma membranes. Involved in neuronal differentiation. As a positive modulator of classical Wnt signaling, may play a crucial role in ciliary signaling during cerebellum embryonic development. The polypeptide is Jouberin (AHI1) (Homo sapiens (Human)).